Reading from the N-terminus, the 418-residue chain is MDRFIIRGGRRLTGEIEIGGAKNSGLKLMVAGLLTSERLVLSNVPAIADIKTMRDLLVGLGITVEDAGPRTLSIGGEIGSVEAPYDIVSKMRASILVLGPLLARAREAKVSLPGGCAIGTRPVDMHLKGLETLGAEIRLENGYINATAPDGLKGDRIILPFASVGATENLLMAATLAKGRTHIVNAAREPEISDLVHCLNAMGAQITGEGSGTLVIDGVEKLHGAHYAVMPDRIECGTYACAAGITGGDLLLVGGRADDLGAVIRTLEETGVEVLEEERGLRVRRSGTLQGVDIMTEPYPGFPTDMQAQFMAMLSVAEGASMITETIFENRFMHVPELNRMGARVNVHGRSAIIRGVPKLSGAPVMATDLRASFSLILAGLAAEGETQLSRIYHLDRGYEGVDRKLAACGADIARVSD.

22–23 (KN) is a phosphoenolpyruvate binding site. UDP-N-acetyl-alpha-D-glucosamine is bound at residue Arg-92. Cys-116 acts as the Proton donor in catalysis. Cys-116 bears the 2-(S-cysteinyl)pyruvic acid O-phosphothioketal mark. UDP-N-acetyl-alpha-D-glucosamine is bound by residues Asp-305 and Ile-327.

This sequence belongs to the EPSP synthase family. MurA subfamily.

The protein resides in the cytoplasm. The catalysed reaction is phosphoenolpyruvate + UDP-N-acetyl-alpha-D-glucosamine = UDP-N-acetyl-3-O-(1-carboxyvinyl)-alpha-D-glucosamine + phosphate. It participates in cell wall biogenesis; peptidoglycan biosynthesis. Its function is as follows. Cell wall formation. Adds enolpyruvyl to UDP-N-acetylglucosamine. In Gluconobacter oxydans (strain 621H) (Gluconobacter suboxydans), this protein is UDP-N-acetylglucosamine 1-carboxyvinyltransferase.